The sequence spans 336 residues: N-acetylornithine carbamoyltransferase (336 aa).

Residues 49-52 (SMRT), tryptophan 77, and arginine 112 contribute to the carbamoyl phosphate site. Glutamate 144 lines the N(2)-acetyl-L-ornithine pocket. 148–151 (HPCQ) provides a ligand contact to carbamoyl phosphate. The N(2)-acetyl-L-ornithine site is built by lysine 252 and leucine 295. 294–295 (CL) lines the carbamoyl phosphate pocket. Position 302 is an N6-carboxylysine (lysine 302). Arginine 322 contributes to the carbamoyl phosphate binding site.

Belongs to the aspartate/ornithine carbamoyltransferase superfamily. AOTCase family. In terms of assembly, homotrimer.

The protein resides in the cytoplasm. The catalysed reaction is N(2)-acetyl-L-ornithine + carbamoyl phosphate = N(2)-acetyl-L-citrulline + phosphate + H(+). The protein operates within amino-acid biosynthesis; L-arginine biosynthesis. Carboxylation at Lys-302 increases the catalytic activity of the enzyme. Catalyzes the transfer of the carbamoyl group from carbamoyl phosphate to the delta-amino group of N(2)-acetyl-L-ornithine to produce N(2)-acetyl-L-citrulline. This is a step in an alternative arginine biosynthesis pathway. The enzyme has no activity with ornithine. The polypeptide is N-acetylornithine carbamoyltransferase (Xylella fastidiosa (strain 9a5c)).